The following is a 280-amino-acid chain: Inhibitor of growth protein 2 (280 aa).

A coiled-coil region spans residues 48-120; the sequence is VLRELDNKYQ…VENRARQMEL (73 aa). The segment at 122–204 is disordered; sequence SQCFQDPAES…KQEREASPVE (83 aa). The segment covering 130 to 140 has biased composition (basic and acidic residues); sequence ESERASDKAKM. Positions 181–193 are enriched in basic residues; the sequence is KKSKSAKKKKRSK. A Glycyl lysine isopeptide (Lys-Gly) (interchain with G-Cter in SUMO1) cross-link involves residue lysine 195. The PHD-type zinc finger occupies 212–261; sequence PTYCLCNQVSYGEMIGCDNEQCPIEWFHFSCVSLTYKPKGKWYCPKCRGD. Residues cysteine 215, cysteine 217, cysteine 228, cysteine 233, histidine 239, cysteine 242, cysteine 255, and cysteine 258 each contribute to the Zn(2+) site. Residues 258 to 274 are compositionally biased toward basic and acidic residues; that stretch reads CRGDNEKTMDKSTEKTK. The tract at residues 258–280 is disordered; sequence CRGDNEKTMDKSTEKTKKDRRSR. A PBR region spans residues 264–280; it reads KTMDKSTEKTKKDRRSR.

Belongs to the ING family. As to quaternary structure, interacts with H3K4me3 and to a lesser extent with H3K4me2. Component of a mSin3A-like complex at least consisting of SIN3A, HDAC1, HDAC2, RBBP4/RbAp48, RBBP7/RbAp46, SAP30 and ING2. Sumoylation enhances its association with SIN3A and is required for binding to some target gene promoters, this is the case for TMEM71. In terms of tissue distribution, widely expressed. Higher expressed in colon-cancer tumor than in normal colon tissues.

Its subcellular location is the nucleus. Its function is as follows. Seems to be involved in p53/TP53 activation and p53/TP53-dependent apoptotic pathways, probably by enhancing acetylation of p53/TP53. Component of a mSin3A-like corepressor complex, which is probably involved in deacetylation of nucleosomal histones. ING2 activity seems to be modulated by binding to phosphoinositides (PtdInsPs). The polypeptide is Inhibitor of growth protein 2 (ING2) (Homo sapiens (Human)).